The sequence spans 353 residues: uncharacterized protein (353 aa).

Residues 1–24 (MRVVERAVIACYLGITIFSGIAFG) form the signal peptide.

It belongs to the chlamydial CPn_1058/CT_355/TC_0634 family.

This is an uncharacterized protein from Chlamydia trachomatis serovar D (strain ATCC VR-885 / DSM 19411 / UW-3/Cx).